We begin with the raw amino-acid sequence, 170 residues long: Centrin-2 (170 aa).

A disordered region spans residues 1–21 (MQRGALRGASPTARRRLVDRP). EF-hand domains are found at residues 26-61 (DEIE…LGFE), 62-97 (TKNP…KLGD), 99-134 (ESRE…LGET), and 135-170 (MSED…KTFP). Ca(2+)-binding residues include D39, D41, S43, M45, and E50.

This sequence belongs to the centrin family. Monomer. Does not homooligomerize.

The protein resides in the cytoplasm. Its subcellular location is the cytoskeleton. It localises to the microtubule organizing center. It is found in the centrosome. In tachyzoites, plays an essential role in microneme secretion that ensures parasite motility and attachment to, invasion of and egress from host cells. Also involved in the architecture of the peripheral annuli where it appears to regulate the localization of PAP2. In association with the myosin motor MyoJ, involved in the constriction of the basal complex at the end of daughter cell division in an actin-dependent manner; the basal complex is a cytoskeletal structure formed at the tachyzoite basal pole during daughter cell formation. May be involved in parasite replication. In Toxoplasma gondii (strain ATCC 50611 / Me49), this protein is Centrin-2.